The following is a 396-amino-acid chain: Tryptophan synthase beta chain (396 aa).

Lys-88 is subject to N6-(pyridoxal phosphate)lysine.

This sequence belongs to the TrpB family. In terms of assembly, tetramer of two alpha and two beta chains. The cofactor is pyridoxal 5'-phosphate.

The catalysed reaction is (1S,2R)-1-C-(indol-3-yl)glycerol 3-phosphate + L-serine = D-glyceraldehyde 3-phosphate + L-tryptophan + H2O. It participates in amino-acid biosynthesis; L-tryptophan biosynthesis; L-tryptophan from chorismate: step 5/5. In terms of biological role, the beta subunit is responsible for the synthesis of L-tryptophan from indole and L-serine. This chain is Tryptophan synthase beta chain, found in Shewanella sp. (strain MR-7).